Consider the following 89-residue polypeptide: Acylphosphatase (89 aa).

Positions 3-88 constitute an Acylphosphatase-like domain; the sequence is TLHLQIEGRV…GEYSGFEKRS (86 aa). Catalysis depends on residues Arg18 and Asn36.

The protein belongs to the acylphosphatase family.

It carries out the reaction an acyl phosphate + H2O = a carboxylate + phosphate + H(+). The protein is Acylphosphatase (acyP) of Thiobacillus denitrificans (strain ATCC 25259 / T1).